A 20-amino-acid chain; its full sequence is Probable cinnamyl alcohol dehydrogenase 1 (20 aa).

It belongs to the zinc-containing alcohol dehydrogenase family. Zn(2+) serves as cofactor.

The catalysed reaction is (E)-cinnamyl alcohol + NADP(+) = (E)-cinnamaldehyde + NADPH + H(+). It catalyses the reaction (E)-coniferol + NADP(+) = (E)-coniferaldehyde + NADPH + H(+). The enzyme catalyses (E)-sinapyl alcohol + NADP(+) = (E)-sinapaldehyde + NADPH + H(+). It carries out the reaction (E)-4-coumaroyl alcohol + NADP(+) = (E)-4-coumaraldehyde + NADPH + H(+). The catalysed reaction is (E)-caffeyl alcohol + NADP(+) = (E)-caffeyl aldehyde + NADPH + H(+). Its pathway is aromatic compound metabolism; phenylpropanoid biosynthesis. In terms of biological role, involved in lignin biosynthesis. Catalyzes the final step specific for the production of lignin monomers, like coniferyl alcohol, sinapyl alcohol and 4-coumaryl alcohol. The protein is Probable cinnamyl alcohol dehydrogenase 1 of Pseudotsuga menziesii (Douglas-fir).